The sequence spans 239 residues: Pyridoxine 5'-phosphate synthase (239 aa).

Asn-7 provides a ligand contact to 3-amino-2-oxopropyl phosphate. A 1-deoxy-D-xylulose 5-phosphate-binding site is contributed by 9–10 (DH). Arg-18 is a 3-amino-2-oxopropyl phosphate binding site. His-43 acts as the Proton acceptor in catalysis. Positions 45 and 50 each coordinate 1-deoxy-D-xylulose 5-phosphate. Glu-70 functions as the Proton acceptor in the catalytic mechanism. Thr-100 contacts 1-deoxy-D-xylulose 5-phosphate. Catalysis depends on His-191, which acts as the Proton donor. Residues Gly-192 and 213–214 (GH) contribute to the 3-amino-2-oxopropyl phosphate site.

Belongs to the PNP synthase family. As to quaternary structure, homooctamer; tetramer of dimers.

Its subcellular location is the cytoplasm. It catalyses the reaction 3-amino-2-oxopropyl phosphate + 1-deoxy-D-xylulose 5-phosphate = pyridoxine 5'-phosphate + phosphate + 2 H2O + H(+). The protein operates within cofactor biosynthesis; pyridoxine 5'-phosphate biosynthesis; pyridoxine 5'-phosphate from D-erythrose 4-phosphate: step 5/5. In terms of biological role, catalyzes the complicated ring closure reaction between the two acyclic compounds 1-deoxy-D-xylulose-5-phosphate (DXP) and 3-amino-2-oxopropyl phosphate (1-amino-acetone-3-phosphate or AAP) to form pyridoxine 5'-phosphate (PNP) and inorganic phosphate. The chain is Pyridoxine 5'-phosphate synthase from Desulforapulum autotrophicum (strain ATCC 43914 / DSM 3382 / VKM B-1955 / HRM2) (Desulfobacterium autotrophicum).